Here is a 253-residue protein sequence, read N- to C-terminus: MLKFVILLSAVACALGGTIPEGLLPQLDGRIVGGTATTISSFPWQISLQRSGSHSCGGSIYTDRVIVTAAHCLQSVSTSSLQIRAGSSYWNSGGVTVKVSSFKNHEGYSARTMVNDIAVIRLSSSLSFSSTIKSISLASSNPPNGAAASVSGWGTQSSGSNSIPSQLQYVNVNIVSQSRCASSTYGYGSDIRDTMICAAASGKDACQGDSGGPLVSGGVLVGVVSWGQGCAYSNYPGVYASVADLRAWVVRNA.

Positions 1–22 (MLKFVILLSAVACALGGTIPEG) are cleaved as a signal peptide. Positions 23 to 30 (LLPQLDGR) are cleaved as a propeptide — activation peptide. Positions 31–253 (IVGGTATTIS…DLRAWVVRNA (223 aa)) constitute a Peptidase S1 domain. A disulfide bond links Cys56 and Cys72. Catalysis depends on charge relay system residues His71 and Asp116. Intrachain disulfides connect Cys180-Cys197 and Cys206-Cys230. The active-site Charge relay system is Ser210.

This sequence belongs to the peptidase S1 family.

It is found in the secreted. Its subcellular location is the extracellular space. The enzyme catalyses Preferential cleavage: Arg-|-Xaa, Lys-|-Xaa.. The sequence is that of Trypsin delta from Drosophila erecta (Fruit fly).